We begin with the raw amino-acid sequence, 156 residues long: CASP-like protein 5C1 (156 aa).

At 1 to 24 (MENRERAGAGAVGSAGSLGLRVEQ) the chain is on the cytoplasmic side. A helical transmembrane segment spans residues 25 to 45 (AVFSSASLLFMSVGVEFFSYT). A topological domain (extracellular) is located at residue alanine 46. Residues 47–67 (FCFLVTIMGLVIPWSCTLAMI) traverse the membrane as a helical segment. The Cytoplasmic segment spans residues 68 to 81 (DVYSILVGCPLRVP). Residues 82-102 (GVMVIVVIGDWVLAILSLAAA) traverse the membrane as a helical segment. Over 103–132 (SSSAAVIDLLLQFHGSHCSPRFCGRYQLSA) the chain is Extracellular. The helical transmembrane segment at 133–153 (MMAFLSWFLTAASSLFNLWFI) threads the bilayer. Residues 154–156 (ASR) are Cytoplasmic-facing.

The protein belongs to the Casparian strip membrane proteins (CASP) family. In terms of assembly, homodimer and heterodimers.

The protein resides in the cell membrane. This Oryza sativa subsp. indica (Rice) protein is CASP-like protein 5C1.